The following is an 803-amino-acid chain: Putative metal ion transporter C27B12.12c (803 aa).

The span at 1–20 shows a compositional bias: polar residues; sequence MSFQQPSNGAQGGNNNALEK. The segment at 1-255 is disordered; the sequence is MSFQQPSNGA…SSDVSGSDEN (255 aa). Low complexity predominate over residues 21–45; that stretch reads TSSNEATSSSSTQVSSLSASGISVS. A compositionally biased stretch (polar residues) spans 58 to 82; it reads MQVQSSQHLEANVQSPVSSQTTYAT. 2 stretches are compositionally biased toward basic residues: residues 105-123 and 152-166; these read KPKKKKRSRRNRKASRKKI and QSNKKHRGRRVKHSP. 2 stretches are compositionally biased toward low complexity: residues 181–194 and 218–253; these read ALSASMGSSSQHAS and SSSSDSLYSVSSMSIKNDSNSDSLSSSSSSDVSGSD. Serine 318 carries the post-translational modification Phosphoserine. Disordered stretches follow at residues 326 to 349 and 406 to 431; these read PRLKSTHSSIADNEDREVDSQVDE and FEPHWNDLSPHDPNDPSSSLHSNNAE. A compositionally biased stretch (acidic residues) spans 337–347; the sequence is DNEDREVDSQV. Residues 406–419 show a composition bias toward basic and acidic residues; it reads FEPHWNDLSPHDPN. A compositionally biased stretch (polar residues) spans 420–430; sequence DPSSSLHSNNA. Serine 449 and serine 452 each carry phosphoserine. The next 2 membrane-spanning stretches (helical) occupy residues 745–765 and 776–796; these read ITLIGTLLVPMNLVTGLFGMN and LAWFFGILGVLLGSIAIGWII.

It belongs to the CorA metal ion transporter (MIT) (TC 1.A.35) family.

It is found in the cytoplasm. Its subcellular location is the membrane. In Schizosaccharomyces pombe (strain 972 / ATCC 24843) (Fission yeast), this protein is Putative metal ion transporter C27B12.12c.